A 321-amino-acid chain; its full sequence is Bifunctional methyltransferase/endonuclease (321 aa).

The tract at residues 1 to 86 (MLSVDYENFD…PLGSAEKMRR (86 aa)) is probable methylated-DNA--protein-cysteine methyltransferase. Residue Cys61 is part of the active site. Residues 87 to 318 (LIRDGITITN…YDFSTRNTAI (232 aa)) form an endonuclease V region. Mg(2+) is bound by residues Asp145 and Asp204.

This sequence in the N-terminal section; belongs to the MGMT family. It in the C-terminal section; belongs to the endonuclease V family. Mg(2+) serves as cofactor.

The protein localises to the cytoplasm. It carries out the reaction Endonucleolytic cleavage at apurinic or apyrimidinic sites to products with a 5'-phosphate.. Functionally, DNA repair enzyme involved in the repair of deaminated bases. Selectively cleaves double-stranded DNA at the second phosphodiester bond 3' to a deoxyinosine leaving behind the intact lesion on the nicked DNA. In Thermoplasma volcanium (strain ATCC 51530 / DSM 4299 / JCM 9571 / NBRC 15438 / GSS1), this protein is Bifunctional methyltransferase/endonuclease.